We begin with the raw amino-acid sequence, 94 residues long: Protein S100-A1 (94 aa).

EF-hand domains are found at residues 13–48 (INVF…FLDA) and 50–85 (KDVD…LTVA). Ca(2+) contacts are provided by lysine 28, glutamate 33, aspartate 63, asparagine 65, aspartate 67, glutamate 69, and glutamate 74. Cysteine 86 is modified (S-nitrosocysteine).

Belongs to the S-100 family. Dimer of either two alpha chains, or two beta chains, or one alpha and one beta chain. Also forms heterodimers with S100P. Interacts with AGER. Interacts with CAPZA1. Interacts with FKBP4. Interacts with RYR1 and RYR2. Interacts with CACYBP in a calcium-dependent manner. Interacts with PPP5C (via TPR repeats); the interaction is calcium-dependent and modulates PPP5C activity. Interacts with ATP2A2 and PLN in a Ca(2+)-dependent manner. Interacts with mitochondrial F1-ATPase subunits ATP5F1A and ATP5F1B; these interactions increase F1-ATPase activity. In terms of processing, glutathionylated; glutathionylation increases affinity to calcium about 10-fold. Highly prevalent in heart. Also found in lesser quantities in skeletal muscle and brain.

It localises to the cytoplasm. It is found in the sarcoplasmic reticulum. The protein localises to the mitochondrion. Small calcium binding protein that plays important roles in several biological processes such as Ca(2+) homeostasis, chondrocyte biology and cardiomyocyte regulation. In response to an increase in intracellular Ca(2+) levels, binds calcium which triggers conformational changes. These changes allow interactions with specific target proteins and modulate their activity. Regulates a network in cardiomyocytes controlling sarcoplasmic reticulum Ca(2+) cycling and mitochondrial function through interaction with the ryanodine receptors RYR1 and RYR2, sarcoplasmic reticulum Ca(2+)-ATPase/ATP2A2 and mitochondrial F1-ATPase. Facilitates diastolic Ca(2+) dissociation and myofilament mechanics in order to improve relaxation during diastole. The sequence is that of Protein S100-A1 (S100A1) from Homo sapiens (Human).